The following is a 293-amino-acid chain: Protein boule-like (293 aa).

Polar residues predominate over residues Met1 to Asp16. The segment at Met1–Tyr39 is disordered. Ser19, Ser21, and Ser26 each carry phosphoserine. An RRM domain is found at Asn45–Arg122. Residues Pro172–Gln196 enclose the DAZ domain.

The protein belongs to the RRM DAZ family. In terms of assembly, interacts with DAZ1 and DAZL. Testis specific. Not expressed in early embryos, primoridal germ cells and spermatogonial cells. First expressed in the cytoplasm of spermatocytes and then persists through meiosis.

It is found in the cytoplasm. Probable RNA-binding protein, which may be required during spermatogenesis. May act by binding to the 3'-UTR of mRNAs and regulating their translation. This is Protein boule-like from Mus musculus (Mouse).